Here is a 338-residue protein sequence, read N- to C-terminus: 26S proteasome regulatory subunit RPN8 (338 aa).

Ser-2 bears the N-acetylserine mark. An MPN domain is found at 8–143 (VTIAPLVLLS…TDAYVAIEQV (136 aa)). Residues 301–326 (IQEQRVKDKQSKVSDDSESESGDKEA) are compositionally biased toward basic and acidic residues. The interval 301–338 (IQEQRVKDKQSKVSDDSESESGDKEATAPLIQRKNKKN) is disordered. Phosphoserine is present on residues Ser-314, Ser-317, and Ser-319. Position 327 is a phosphothreonine (Thr-327).

The protein belongs to the peptidase M67A family. In terms of processing, N-acetylated by NAT1.

Its function is as follows. Acts as a regulatory subunit of the 26S proteasome which is involved in the ATP-dependent degradation of ubiquitinated proteins. The polypeptide is 26S proteasome regulatory subunit RPN8 (RPN8) (Saccharomyces cerevisiae (strain ATCC 204508 / S288c) (Baker's yeast)).